The chain runs to 731 residues: Elongation factor 2 (731 aa).

In terms of domain architecture, tr-type G spans Glu19–Lys234. GTP contacts are provided by residues Ala28 to Thr35, Asp94 to His98, and Asn148 to Asp151. His598 bears the Diphthamide mark.

This sequence belongs to the TRAFAC class translation factor GTPase superfamily. Classic translation factor GTPase family. EF-G/EF-2 subfamily.

It localises to the cytoplasm. Catalyzes the GTP-dependent ribosomal translocation step during translation elongation. During this step, the ribosome changes from the pre-translocational (PRE) to the post-translocational (POST) state as the newly formed A-site-bound peptidyl-tRNA and P-site-bound deacylated tRNA move to the P and E sites, respectively. Catalyzes the coordinated movement of the two tRNA molecules, the mRNA and conformational changes in the ribosome. This chain is Elongation factor 2, found in Methanobrevibacter ruminantium (strain ATCC 35063 / DSM 1093 / JCM 13430 / OCM 146 / M1) (Methanobacterium ruminantium).